The chain runs to 760 residues: General transcription and DNA repair factor IIH helicase subunit XPD (760 aa).

Residues 7-283 (GLLVYFPYDY…KETDEQRLRD (277 aa)) form the Helicase ATP-binding domain. ATP is bound at residue 42–49 (MPSGTGKT). The [4Fe-4S] cluster site is built by C116, C134, C155, and C190. Positions 234–237 (DEAH) match the DEAH box motif. A mediates interaction with MMS19 region spans residues 438-637 (MDASLAIKPV…TQSRILKARL (200 aa)). A Nuclear localization signal motif is present at residues 682–695 (KRFARADKRGKLPR).

Belongs to the helicase family. RAD3/XPD subfamily. In terms of assembly, component of the 7-subunit TFIIH core complex composed of XPB/ERCC3, XPD/ERCC2, GTF2H1, GTF2H2, GTF2H3, GTF2H4 and GTF2H5, which is active in NER. The core complex associates with the 3-subunit CDK-activating kinase (CAK) module composed of CCNH/cyclin H, CDK7 and MNAT1 to form the 10-subunit holoenzyme (holo-TFIIH) active in transcription. The interaction with GTF2H2 results in the stimulation of the 5'--&gt;3' helicase activity. Component of the MMXD complex, which includes CIAO1, ERCC2, CIAO2B, MMS19 and SLC25A5. Interacts with CIAO1 and CIAO2B; the interaction WITH CIAO2B is direct. Interacts with ATF7IP. Interacts directly with MMS19. Part of TBP-based Pol II pre-initiation complex (PIC), in which Pol II core assembles with general transcription factors and other specific initiation factors including GTF2E1, GTF2E2, GTF2F1, GTF2F2, TCEA1, ERCC2, ERCC3, GTF2H2, GTF2H3, GTF2H4, GTF2H5, GTF2A1, GTF2A2, GTF2B and TBP; this large multi-subunit PIC complex mediates DNA unwinding and targets Pol II core to the transcription start site where the first phosphodiester bond forms. Mg(2+) is required as a cofactor. [4Fe-4S] cluster serves as cofactor. Post-translationally, ISGylated.

The protein localises to the nucleus. The protein resides in the cytoplasm. It localises to the cytoskeleton. It is found in the spindle. It catalyses the reaction Couples ATP hydrolysis with the unwinding of duplex DNA at the replication fork by translocating in the 5'-3' direction. This creates two antiparallel DNA single strands (ssDNA). The leading ssDNA polymer is the template for DNA polymerase III holoenzyme which synthesizes a continuous strand.. It carries out the reaction ATP + H2O = ADP + phosphate + H(+). Functionally, ATP-dependent 5'-3' DNA helicase. Component of the general transcription and DNA repair factor IIH (TFIIH) core complex which is involved in general and transcription-coupled nucleotide excision repair (NER) of damaged DNA. When complexed to CDK-activating kinase (CAK), involved in transcription by RNA polymerase II. In NER, TFIIH acts by opening DNA around the lesion to allow the excision of the damaged oligonucleotide and its replacement by a new DNA fragment. The ATP-dependent helicase activity of XPD/ERCC2 is required for DNA opening. In transcription, TFIIH has an essential role in transcription initiation. When the pre-initiation complex (PIC) has been established, TFIIH is required for promoter opening and promoter escape. Phosphorylation of the C-terminal tail (CTD) of the largest subunit of RNA polymerase II by the kinase module CAK controls the initiation of transcription. XPD/ERCC2 acts by forming a bridge between CAK and the core-TFIIH complex. Involved in the regulation of vitamin-D receptor activity. As part of the mitotic spindle-associated MMXD complex it plays a role in chromosome segregation. Might have a role in aging process and could play a causative role in the generation of skin cancers. The polypeptide is General transcription and DNA repair factor IIH helicase subunit XPD (Cricetulus griseus (Chinese hamster)).